The primary structure comprises 231 residues: Uracil-DNA glycosylase (231 aa).

Asp-74 (proton acceptor) is an active-site residue.

It belongs to the uracil-DNA glycosylase (UDG) superfamily. UNG family.

The protein localises to the cytoplasm. The enzyme catalyses Hydrolyzes single-stranded DNA or mismatched double-stranded DNA and polynucleotides, releasing free uracil.. Excises uracil residues from the DNA which can arise as a result of misincorporation of dUMP residues by DNA polymerase or due to deamination of cytosine. The protein is Uracil-DNA glycosylase of Campylobacter jejuni subsp. jejuni serotype O:6 (strain 81116 / NCTC 11828).